A 101-amino-acid chain; its full sequence is MPAEPLSPQEVEERLATLPGWSLDAGRLTRSYRLGSHFAAAAMVVHVAQVQEELDHHSDLTLGYHTVALAVHTHSAGGAVTEKDVELARRVEDLAAGHGAH.

It belongs to the pterin-4-alpha-carbinolamine dehydratase family.

It catalyses the reaction (4aS,6R)-4a-hydroxy-L-erythro-5,6,7,8-tetrahydrobiopterin = (6R)-L-erythro-6,7-dihydrobiopterin + H2O. The protein is Putative pterin-4-alpha-carbinolamine dehydratase of Streptomyces coelicolor (strain ATCC BAA-471 / A3(2) / M145).